A 531-amino-acid polypeptide reads, in one-letter code: T-complex protein 1 subunit zeta (531 aa).

Alanine 2 is subject to N-acetylalanine. N6-acetyllysine is present on lysine 5. Residue glycine 39 participates in ADP binding. Position 39 (glycine 39) interacts with ATP. Residue aspartate 90 coordinates Mg(2+). The ADP site is built by glycine 91, threonine 92, threonine 93, serine 94, threonine 158, and lysine 159. ATP-binding residues include glycine 91, threonine 92, and threonine 93. Position 199 is an N6-acetyllysine (lysine 199). Position 205 is a phosphoserine (serine 205). A Glycyl lysine isopeptide (Lys-Gly) (interchain with G-Cter in SUMO2) cross-link involves residue lysine 251. An N6-acetyllysine mark is found at lysine 287, lysine 365, lysine 377, and lysine 388. An ADP-binding site is contributed by alanine 411. ATP is bound by residues alanine 411, glycine 412, aspartate 496, and lysine 501. ADP is bound at residue aspartate 496.

Belongs to the TCP-1 chaperonin family. In terms of assembly, component of the chaperonin-containing T-complex (TRiC), a hexadecamer composed of two identical back-to-back stacked rings enclosing a protein folding chamber. Each ring is made up of eight different subunits: TCP1/CCT1, CCT2, CCT3, CCT4, CCT5, CCT6A/CCT6, CCT7, CCT8. Interacts with PACRG.

The protein localises to the cytoplasm. The catalysed reaction is ATP + H2O = ADP + phosphate + H(+). Its function is as follows. Component of the chaperonin-containing T-complex (TRiC), a molecular chaperone complex that assists the folding of actin, tubulin and other proteins upon ATP hydrolysis. The TRiC complex mediates the folding of WRAP53/TCAB1, thereby regulating telomere maintenance. This chain is T-complex protein 1 subunit zeta (CCT6), found in Oryctolagus cuniculus (Rabbit).